The chain runs to 92 residues: Protein S100-B (92 aa).

Position 2 is an N-acetylserine (Ser-2). 2 EF-hand domains span residues 13–48 (DVFHQYSGREGDKHKLKKSELKELINNELSHFLEEI) and 49–84 (KEQEVVDKVMETLDEDGDGECDFQEFMAFVSMVTTA). A Zn(2+)-binding site is contributed by His-16. Positions 19 and 22 each coordinate Ca(2+). His-26 is a binding site for Zn(2+). 7 residues coordinate Ca(2+): Lys-27, Glu-32, Asp-62, Asp-64, Asp-66, Glu-68, and Glu-73. Residues His-86 and His-91 each contribute to the Zn(2+) site.

It belongs to the S-100 family. As to quaternary structure, dimer of either two alpha chains, or two beta chains, or one alpha and one beta chain. The S100B dimer binds two molecules of STK38. Interacts with CACYBP in a calcium-dependent manner. Interacts with ATAD3A; this interaction probably occurs in the cytosol prior to ATAD3A mitochondrial targeting. Interacts with S100A6. The S100B dimer interacts with two molecules of CAPZA1. Interacts with AGER. Interacts with PPP5C (via TPR repeats); the interaction is calcium-dependent and modulates PPP5C activity. Interacts with TPPP; this interaction inhibits TPPP dimerization. Interacts with isoform CLSTN3beta of CLSTN3; interaction promotes secretion. As to expression, although predominant among the water-soluble brain proteins, S100 is also found in a variety of other tissues.

It is found in the cytoplasm. It localises to the nucleus. The protein localises to the secreted. Its function is as follows. Small zinc- and- and calcium-binding protein that is highly expressed in astrocytes and constitutes one of the most abundant soluble proteins in brain. Weakly binds calcium but binds zinc very tightly-distinct binding sites with different affinities exist for both ions on each monomer. Physiological concentrations of potassium ion antagonize the binding of both divalent cations, especially affecting high-affinity calcium-binding sites. Acts as a neurotrophic factor that promotes astrocytosis and axonal proliferation. Involved in innervation of thermogenic adipose tissue by acting as an adipocyte-derived neurotrophic factor that promotes sympathetic innervation of adipose tissue. Binds to and initiates the activation of STK38 by releasing autoinhibitory intramolecular interactions within the kinase. Interaction with AGER after myocardial infarction may play a role in myocyte apoptosis by activating ERK1/2 and p53/TP53 signaling. Could assist ATAD3A cytoplasmic processing, preventing aggregation and favoring mitochondrial localization. May mediate calcium-dependent regulation on many physiological processes by interacting with other proteins, such as TPR-containing proteins, and modulating their activity. This is Protein S100-B from Rattus norvegicus (Rat).